The primary structure comprises 195 residues: Holliday junction branch migration complex subunit RuvA (195 aa).

The segment at 1–61 is domain I; that stretch reads MYEYFEGIIS…DTGITLYGFQ (61 aa). The segment at 62–140 is domain II; the sequence is DQDDKGLFLK…DYVARLDKPE (79 aa). The interval 141–146 is flexible linker; the sequence is NGEEIS. Residues 146 to 195 form a domain III region; it reads SPALNDALLALIALGYTQKEVDRITPKLVEIEADTADQYIKKGLALLLKK.

The protein belongs to the RuvA family. In terms of assembly, homotetramer. Forms an RuvA(8)-RuvB(12)-Holliday junction (HJ) complex. HJ DNA is sandwiched between 2 RuvA tetramers; dsDNA enters through RuvA and exits via RuvB. An RuvB hexamer assembles on each DNA strand where it exits the tetramer. Each RuvB hexamer is contacted by two RuvA subunits (via domain III) on 2 adjacent RuvB subunits; this complex drives branch migration. In the full resolvosome a probable DNA-RuvA(4)-RuvB(12)-RuvC(2) complex forms which resolves the HJ.

It is found in the cytoplasm. Functionally, the RuvA-RuvB-RuvC complex processes Holliday junction (HJ) DNA during genetic recombination and DNA repair, while the RuvA-RuvB complex plays an important role in the rescue of blocked DNA replication forks via replication fork reversal (RFR). RuvA specifically binds to HJ cruciform DNA, conferring on it an open structure. The RuvB hexamer acts as an ATP-dependent pump, pulling dsDNA into and through the RuvAB complex. HJ branch migration allows RuvC to scan DNA until it finds its consensus sequence, where it cleaves and resolves the cruciform DNA. This Lactobacillus acidophilus (strain ATCC 700396 / NCK56 / N2 / NCFM) protein is Holliday junction branch migration complex subunit RuvA.